A 491-amino-acid polypeptide reads, in one-letter code: Delayed-rectifier potassium channel regulatory subunit KCNS3 (491 aa).

At 1-182 (MVFGEFFHRP…IRMENPAYCL (182 aa)) the chain is on the cytoplasmic side. A helical membrane pass occupies residues 183–204 (SAKLIAISSLSVVLASIVAMCV). Over 205-220 (HSMSEFQNEDGEVDDP) the chain is Extracellular. A helical transmembrane segment spans residues 221–243 (VLEGVEIACIAWFTGELAVRLAA). Residues 244 to 254 (APCQKKFWKNP) are Cytoplasmic-facing. The helical transmembrane segment at 255–275 (LNIIDFVSIIPFYATLAVDTK) threads the bilayer. Residues 276–285 (EEESEDIENM) lie on the Extracellular side of the membrane. The chain crosses the membrane as a helical; Voltage-sensor span at residues 286-306 (GKVVQILRLMRIFRILKLARH). The Cytoplasmic portion of the chain corresponds to 307 to 321 (SVGLRSLGATLRHSY). The chain crosses the membrane as a helical span at residues 322–343 (HEVGLLLLFLSVGISIFSVLIY). The Extracellular portion of the chain corresponds to 344–357 (SVEKDDHTSSLTSI). An intramembrane region (helical) is located at residues 358-369 (PICWWWATISMT). Positions 370-375 (TVGYGD) match the Selectivity filter motif. Residues 370-377 (TVGYGDTH) lie within the membrane without spanning it. At 378-384 (PVTLAGK) the chain is on the extracellular side. Residues 385-413 (LIASTCIICGILVVALPITIIFNKFSKYY) traverse the membrane as a helical segment. Residues 414 to 491 (QKQKDIDVDQ…TTSLENCTAK (78 aa)) are Cytoplasmic-facing.

This sequence belongs to the potassium channel family. S (TC 1.A.1.2) subfamily. Kv9.3/KCNS3 sub-subfamily. Heterotetramer with KCNB1. Does not form homomultimers. Detected in whole normal term placental and placental chorionic plate arteries and veins. Detected in syncytiotrophoblast and in blood vessel endothelium within intermediate villi and chorionic plate (at protein level). Detected in most tissues, but not in peripheral blood lymphocytes. The highest levels of expression are in lung.

The protein localises to the cell membrane. In terms of biological role, potassium channel regulatory subunit that modulates the delayed rectifier potassium channel activity of KCNB1 by namely slowing down the deactivation and inactivation time constants. While it does not form functional channel on its own, it can form functional heterotetrameric channels with KCNB1. The protein is Delayed-rectifier potassium channel regulatory subunit KCNS3 of Homo sapiens (Human).